The sequence spans 299 residues: N-acetylaspartate synthetase (299 aa).

The segment covering 44-57 (AAPGPAAAPPPAAG) has biased composition (pro residues). A disordered region spans residues 44–70 (AAPGPAAAPPPAAGPQPHGGTGGAGPP). A compositionally biased stretch (gly residues) spans 60 to 70 (PHGGTGGAGPP). Residues 118–138 (YALLAALCFAVTRSLLLTCLV) traverse the membrane as a helical segment. Residues 143-280 (LALRYYYSRK…VLPGMTLSLA (138 aa)) enclose the N-acetyltransferase domain.

Belongs to the NAT8 family. In terms of tissue distribution, expressed in brain, kidney, liver and spleen. In brain, present in neurons but not in astrocytes (at protein level). Expressed in brain, thymus and spleen.

The protein resides in the cytoplasm. The protein localises to the microsome membrane. It is found in the mitochondrion membrane. Its subcellular location is the endoplasmic reticulum membrane. The catalysed reaction is L-aspartate + acetyl-CoA = N-acetyl-L-aspartate + CoA + H(+). Its activity is regulated as follows. Aminooxyacetic acid (AOAA) blocks its activity in both cytoplasm and mitochondria. In terms of biological role, catalyzes the synthesis of N-acetylaspartate acid (NAA) from L-aspartate and acetyl-CoA. Promotes dopamine uptake by regulating TNF-alpha expression. Attenuates methamphetamine-induced inhibition of dopamine uptake. In Mus musculus (Mouse), this protein is N-acetylaspartate synthetase (Nat8l).